A 1081-amino-acid chain; its full sequence is Zinc finger protein 827 (1081 aa).

Over residues 1 to 10 (MPRRKQEQPK) the composition is skewed to basic and acidic residues. The segment at 1–14 (MPRRKQEQPKRLPS) is mediates direct interaction with RBBP4. Positions 1–77 (MPRRKQEQPK…DTSLGSTTPS (77 aa)) are disordered. An RRK motif; mediates NuRD recruitment to telomeres motif is present at residues 3–5 (RRK). The segment covering 62 to 77 (EQSTSPDTSLGSTTPS) has biased composition (polar residues). Residues K176, K216, and K226 each participate in a glycyl lysine isopeptide (Lys-Gly) (interchain with G-Cter in SUMO2) cross-link. 2 disordered regions span residues 258–280 (KKVS…SFLS) and 305–348 (EKSS…SLEL). Over residues 327 to 344 (VSPPPPPPPPPPPPPPPQ) the composition is skewed to pro residues. Glycyl lysine isopeptide (Lys-Gly) (interchain with G-Cter in SUMO2) cross-links involve residues K360 and K372. C2H2-type zinc fingers lie at residues 374-396 (FQCP…MVIH), 402-424 (HQCP…MKVH), and 433-455 (FQCQ…MRCH). Glycyl lysine isopeptide (Lys-Gly) (interchain with G-Cter in SUMO2) cross-links involve residues K466, K475, K523, K549, K580, K587, and K597. A disordered region spans residues 525-553 (EPKEDNGLPTSFTLNTADRPANHTKLKDP). Residues 616–627 (VFSPESEVSTPG) are compositionally biased toward polar residues. The tract at residues 616–640 (VFSPESEVSTPGVSEDALKPQEGKG) is disordered. A compositionally biased stretch (basic and acidic residues) spans 631–640 (DALKPQEGKG). Glycyl lysine isopeptide (Lys-Gly) (interchain with G-Cter in SUMO2) cross-links involve residues K634, K639, and K658. K673 participates in a covalent cross-link: Glycyl lysine isopeptide (Lys-Gly) (interchain with G-Cter in SUMO1); alternate. K673 participates in a covalent cross-link: Glycyl lysine isopeptide (Lys-Gly) (interchain with G-Cter in SUMO2); alternate. Glycyl lysine isopeptide (Lys-Gly) (interchain with G-Cter in SUMO2) cross-links involve residues K704, K710, K742, K778, and K798. 2 consecutive C2H2-type zinc fingers follow at residues 817 to 839 (FPCD…LSLH) and 845 to 867 (YKCH…LTVH). Glycyl lysine isopeptide (Lys-Gly) (interchain with G-Cter in SUMO2) cross-links involve residues K870 and K891. 2 consecutive C2H2-type zinc fingers follow at residues 897–919 (YSCH…MSLH) and 929–952 (ICCT…GTKH). A compositionally biased stretch (basic and acidic residues) spans 947–960 (HIGTKHTGEDRKTP). The tract at residues 947 to 1013 (HIGTKHTGED…GSQPSLNSEE (67 aa)) is disordered. K958 is covalently cross-linked (Glycyl lysine isopeptide (Lys-Gly) (interchain with G-Cter in SUMO2)). Over residues 961–978 (SESNSPSSSSLSALSDSA) the composition is skewed to low complexity. Residues 979–988 (NSKDDSDGSQ) are compositionally biased toward basic and acidic residues. Residue K1014 forms a Glycyl lysine isopeptide (Lys-Gly) (interchain with G-Cter in SUMO2) linkage. 2 C2H2-type zinc fingers span residues 1019-1041 (FECV…LQIH) and 1047-1069 (FECD…KKCH).

The protein belongs to the krueppel C2H2-type zinc-finger protein family. As to quaternary structure, part of a transcription inhibitory ribonucleoprotein complex composed at least of the circular RNA circZNF827, HNRNPK and HNRNPL. Interacts with the nucleosome remodeling and histone deacetylase/NuRD complex. Interacts with RBBP4; the interaction is direct and recruits RBBP4, a component of the NuRD complex, to telomeres.

The protein localises to the nucleus. Its subcellular location is the chromosome. It is found in the telomere. Its function is as follows. As part of a ribonucleoprotein complex composed at least of HNRNPK, HNRNPL and the circular RNA circZNF827 that nucleates the complex on chromatin, may negatively regulate the transcription of genes involved in neuronal differentiation. Could also recruit the nucleosome remodeling and histone deacetylase/NuRD complex to telomeric regions of chromosomes to regulate chromatin remodeling as part of telomere maintenance. In Macaca fascicularis (Crab-eating macaque), this protein is Zinc finger protein 827 (ZNF827).